The following is an 800-amino-acid chain: Protein MICRORCHIDIA 4 (800 aa).

2 disordered regions span residues 1 to 76 and 552 to 702; these read MEPI…ARSD and AKRQ…RTLS. A compositionally biased stretch (polar residues) spans 9–18; sequence NPVTTSTLST. The span at 36-47 shows a compositional bias: low complexity; it reads ELSSSNEGSELG. Basic and acidic residues-rich tracts occupy residues 559–578 and 628–641; these read SAKD…EFDP and VSKD…EKGG. Positions 666–675 are enriched in acidic residues; that stretch reads NSDDDYDCDS. A coiled-coil region spans residues 699 to 766; sequence RTLSQLEQEN…QASLIDVFAE (68 aa). Short sequence motifs (nuclear localization signal) lie at residues 716–723 and 735–742; these read DKKEEVFL and LRKTLEAE.

It belongs to the MORC ATPase protein family. Homodimer and heterodimer. Component of an RNA-directed DNA methylation (RdDM) complex. Forms homomeric complexes. It depends on Mg(2+) as a cofactor. Mn(2+) is required as a cofactor.

The protein localises to the nucleus. Functionally, exhibits ATPase activity. Binds DNA/RNA in a non-specific manner and exhibits endonuclease activity. Probably involved in DNA repair. Involved in RNA-directed DNA methylation (RdDM) as a component of the RdDM machinery and required for gene silencing. May also be involved in the regulation of chromatin architecture to maintain gene silencing. Together with MORC7, acts to suppress a wide set of non-methylated protein-coding genes, especially involved in pathogen response. Positive regulator of defense against the oomycete Hyaloperonospora arabidopsidis (Hpa). This is Protein MICRORCHIDIA 4 from Arabidopsis thaliana (Mouse-ear cress).